A 355-amino-acid chain; its full sequence is S-adenosylmethionine:tRNA ribosyltransferase-isomerase (355 aa).

Belongs to the QueA family. As to quaternary structure, monomer.

It is found in the cytoplasm. The enzyme catalyses 7-aminomethyl-7-carbaguanosine(34) in tRNA + S-adenosyl-L-methionine = epoxyqueuosine(34) in tRNA + adenine + L-methionine + 2 H(+). It participates in tRNA modification; tRNA-queuosine biosynthesis. Functionally, transfers and isomerizes the ribose moiety from AdoMet to the 7-aminomethyl group of 7-deazaguanine (preQ1-tRNA) to give epoxyqueuosine (oQ-tRNA). The chain is S-adenosylmethionine:tRNA ribosyltransferase-isomerase from Aeromonas hydrophila subsp. hydrophila (strain ATCC 7966 / DSM 30187 / BCRC 13018 / CCUG 14551 / JCM 1027 / KCTC 2358 / NCIMB 9240 / NCTC 8049).